We begin with the raw amino-acid sequence, 1073 residues long: Probable cellulose synthase A catalytic subunit 2 [UDP-forming] (1073 aa).

Over 1–270 (MDGAKSGKQC…SSSRINPYRM (270 aa)) the chain is Cytoplasmic. Residues cysteine 13, cysteine 16, cysteine 32, cysteine 35, cysteine 40, cysteine 43, cysteine 55, and cysteine 58 each contribute to the Zn(2+) site. The segment at 13–59 (CQICGDGVGTAADGELFTACDVCGFPVCRPCYEYERKDGSQACPQCK) adopts an RING-type; degenerate zinc-finger fold. The disordered stretch occupies residues 66 to 98 (KGSPPILGDESDDVDADDASDVNYPTSGNQDHK). A compositionally biased stretch (acidic residues) spans 74–85 (DESDDVDADDAS). Residues 271 to 291 (VIVLRLIVLCIFLHYRITNPV) form a helical membrane-spanning segment. Residues 292 to 293 (RN) are Extracellular-facing. A helical membrane pass occupies residues 294-314 (AYPLWLLSVICEIWFALSWIL). The Cytoplasmic segment spans residues 315 to 856 (DQFPKWSPIN…INTTIYPLTS (542 aa)). UDP-alpha-D-glucose-binding residues include serine 353, lysine 359, glutamate 360, and aspartate 389. Aspartate 389 is a catalytic residue. Positions 443–470 (VKDRRAMKREYEEFKVRVNALVAKAQKV) form a coiled coil. Lysine 530 lines the UDP-alpha-D-glucose pocket. Residues lysine 531 and aspartate 555 each contribute to the Mn(2+) site. The disordered stretch occupies residues 655–676 (GGRKKTKKSKEKSTEKKKSHKH). Aspartate 773 is an active-site residue. Residues 857-877 (IPLLLYCILPAICLLTGKFII) form a helical membrane-spanning segment. At 878 to 882 (PEISN) the chain is on the extracellular side. Residues 883 to 903 (FASIWFISLFLSIFATGILEM) traverse the membrane as a helical segment. The Cytoplasmic segment spans residues 904–918 (RWSGVGIDEWWRNEQ). Residues 919-939 (FWVIGGISAHLFAVFQGLLKV) form a helical membrane-spanning segment. The Extracellular portion of the chain corresponds to 940-969 (LAGIDTSFTVTSKASDEEGDFAELYMFKWT). The chain crosses the membrane as a helical span at residues 970–990 (TLLIPPTTILIINLVGVVAGI). At 991-1001 (SYAINSGYQSW) the chain is on the cytoplasmic side. The chain crosses the membrane as a helical span at residues 1002–1022 (GPLFGKLFFAFWVIVHLYPFL). The Extracellular segment spans residues 1023–1031 (KGLMGRQNR). A helical membrane pass occupies residues 1032–1052 (TPTIVVVWAILLASIFSLLWV). Residues 1053-1073 (RIDPFTTRVTGPDTQKCGINC) are Cytoplasmic-facing.

Belongs to the glycosyltransferase 2 family. Plant cellulose synthase subfamily. Mn(2+) serves as cofactor. The cofactor is Zn(2+).

It is found in the cell membrane. The catalysed reaction is [(1-&gt;4)-beta-D-glucosyl](n) + UDP-alpha-D-glucose = [(1-&gt;4)-beta-D-glucosyl](n+1) + UDP + H(+). Its pathway is glycan metabolism; plant cellulose biosynthesis. Its function is as follows. Probable catalytic subunit of cellulose synthase terminal complexes ('rosettes'), required for beta-1,4-glucan microfibril crystallization, a major mechanism of the cell wall formation. In Oryza sativa subsp. japonica (Rice), this protein is Probable cellulose synthase A catalytic subunit 2 [UDP-forming] (CESA2).